The primary structure comprises 315 residues: Beta-carotene hydroxylase 1, chloroplastic (315 aa).

Residues 1-58 constitute a chloroplast transit peptide; the sequence is MAAEISISASSRAICLQRNPFPAPKYFATAPPLLFFSPLTCNLDAILRSRRKPRLAAC. A run of 2 helical transmembrane segments spans residues 112–132 and 146–166; these read YLVAAVMSSLGITSMAVISVY and FSEMFCTFALAFGAAIGMEYW. The 128-residue stretch at 159–286 folds into the Fatty acid hydroxylase domain; sequence AAIGMEYWAR…KFDGVPYGLF (128 aa). The Histidine box-1 signature appears at 171 to 176; the sequence is HRALWH. Positions 183–187 match the Histidine box-2 motif; that stretch reads HESHH. A run of 2 helical transmembrane segments spans residues 196–216 and 222–242; these read LNDIFAIINAVPAIALLSFGF and IPGLCFGAGLGITVFGMAYMF. Residues 244–249 carry the Histidine box-3 motif; it reads HDGLVH. Residues 270–274 carry the Histidine box-4 motif; sequence HQLHH.

The protein belongs to the sterol desaturase family.

It is found in the plastid. The protein resides in the chloroplast membrane. It catalyses the reaction all-trans-beta-carotene + 4 reduced [2Fe-2S]-[ferredoxin] + 2 O2 + 4 H(+) = all-trans-zeaxanthin + 4 oxidized [2Fe-2S]-[ferredoxin] + 2 H2O. It carries out the reaction all-trans-beta-carotene + 2 reduced [2Fe-2S]-[ferredoxin] + O2 + 2 H(+) = beta-cryptoxanthin + 2 oxidized [2Fe-2S]-[ferredoxin] + H2O. The enzyme catalyses beta-cryptoxanthin + 2 reduced [2Fe-2S]-[ferredoxin] + O2 + 2 H(+) = all-trans-zeaxanthin + 2 oxidized [2Fe-2S]-[ferredoxin] + H2O. Its activity is regulated as follows. Inhibited by o-phenanthroline and 8-hydroxyquinoline. Nonheme diiron monooxygenase involved in the biosynthesis of xanthophylls. Specific for beta-ring hydroxylations of beta-carotene. Produces beta-cryptoxanthin and zeaxanthin. Uses ferredoxin as an electron donor. This chain is Beta-carotene hydroxylase 1, chloroplastic, found in Capsicum annuum (Capsicum pepper).